A 639-amino-acid polypeptide reads, in one-letter code: Probable potassium transport system protein Kup 1 (639 aa).

Residues 1–16 (MALANTGSEAEPVEQS) are compositionally biased toward polar residues. The segment at 1 to 21 (MALANTGSEAEPVEQSSHPEI) is disordered. The next 12 membrane-spanning stretches (helical) occupy residues 29-49 (LMLG…IYAF), 67-87 (ILGV…IKYI), 117-137 (AVIL…AVIT), 154-174 (PTFQ…VFAV), 182-202 (VGLV…LSGL), 220-240 (IVAF…AIFL), 260-280 (IVLA…AGQG), 302-322 (ALIP…QAVI), 354-374 (IYMP…VVGF), 383-403 (AYGI…YVVM), 411-431 (LWVA…FFAS), and 436-456 (VFEG…GMWT).

The protein belongs to the HAK/KUP transporter (TC 2.A.72) family.

Its subcellular location is the cell inner membrane. The catalysed reaction is K(+)(in) + H(+)(in) = K(+)(out) + H(+)(out). Functionally, transport of potassium into the cell. Likely operates as a K(+):H(+) symporter. The sequence is that of Probable potassium transport system protein Kup 1 from Mesorhizobium japonicum (strain LMG 29417 / CECT 9101 / MAFF 303099) (Mesorhizobium loti (strain MAFF 303099)).